Reading from the N-terminus, the 388-residue chain is Sex-determination protein fem-3 (388 aa).

6 tandem repeats follow at residues serine 7–valine 10, isoleucine 110–phenylalanine 113, isoleucine 141–phenylalanine 144, tyrosine 234–threonine 237, tyrosine 284–threonine 287, and serine 371–valine 374.

Component of a complex containing fem-1, fem-2 and fem-3. Interacts with fem-1 and fem-2 (via N-terminus). Part of a E3 ubiquitin-protein ligase complex, at least composed of cul-2, elc-1, tra-1, fem-1, fem-2 and fem-3; mediates the ubiquitination and subsequent proteasomal degradation of tra-1. Interacts with tra-1. Interacts with sel-10. Interacts with tra-2.

In terms of biological role, required for male development. In XO (male) animals, fem-3 directs male differentiation in all tissues. In XX (hermaphrodite) animals, it specifies the first 80 or so germ cells to be sperm. Negatively regulates male development when bound to tra-2. Together with fem-2 associates with the CBC(fem-1) E3 ubiquitin-protein ligase complex which mediates the ubiquitination and subsequent proteasomal degradation of tra-1. The sequence is that of Sex-determination protein fem-3 (fem-3) from Caenorhabditis elegans.